We begin with the raw amino-acid sequence, 159 residues long: Cyclic pyranopterin monophosphate synthase (159 aa).

Substrate-binding positions include 74 to 76 and 112 to 113; these read MCH and ME. Residue D127 is part of the active site.

The protein belongs to the MoaC family. As to quaternary structure, homohexamer; trimer of dimers.

The enzyme catalyses (8S)-3',8-cyclo-7,8-dihydroguanosine 5'-triphosphate = cyclic pyranopterin phosphate + diphosphate. It participates in cofactor biosynthesis; molybdopterin biosynthesis. In terms of biological role, catalyzes the conversion of (8S)-3',8-cyclo-7,8-dihydroguanosine 5'-triphosphate to cyclic pyranopterin monophosphate (cPMP). This Helicobacter hepaticus (strain ATCC 51449 / 3B1) protein is Cyclic pyranopterin monophosphate synthase.